The following is a 229-amino-acid chain: UPF0128 protein aq_756 (229 aa).

It belongs to the UPF0128 family.

This Aquifex aeolicus (strain VF5) protein is UPF0128 protein aq_756.